We begin with the raw amino-acid sequence, 286 residues long: ATP synthase gamma chain (286 aa).

It belongs to the ATPase gamma chain family. F-type ATPases have 2 components, CF(1) - the catalytic core - and CF(0) - the membrane proton channel. CF(1) has five subunits: alpha(3), beta(3), gamma(1), delta(1), epsilon(1). CF(0) has three main subunits: a, b and c.

It localises to the cell inner membrane. In terms of biological role, produces ATP from ADP in the presence of a proton gradient across the membrane. The gamma chain is believed to be important in regulating ATPase activity and the flow of protons through the CF(0) complex. The protein is ATP synthase gamma chain of Leptospira borgpetersenii serovar Hardjo-bovis (strain JB197).